Here is a 329-residue protein sequence, read N- to C-terminus: 4-hydroxythreonine-4-phosphate dehydrogenase (329 aa).

Residues His136 and Thr137 each coordinate substrate. His166, His211, and His266 together coordinate a divalent metal cation. Substrate contacts are provided by Lys274, Asn283, and Arg292.

This sequence belongs to the PdxA family. As to quaternary structure, homodimer. Requires Zn(2+) as cofactor. The cofactor is Mg(2+). Co(2+) is required as a cofactor.

Its subcellular location is the cytoplasm. The enzyme catalyses 4-(phosphooxy)-L-threonine + NAD(+) = 3-amino-2-oxopropyl phosphate + CO2 + NADH. Its pathway is cofactor biosynthesis; pyridoxine 5'-phosphate biosynthesis; pyridoxine 5'-phosphate from D-erythrose 4-phosphate: step 4/5. Functionally, catalyzes the NAD(P)-dependent oxidation of 4-(phosphooxy)-L-threonine (HTP) into 2-amino-3-oxo-4-(phosphooxy)butyric acid which spontaneously decarboxylates to form 3-amino-2-oxopropyl phosphate (AHAP). This chain is 4-hydroxythreonine-4-phosphate dehydrogenase, found in Pseudomonas putida (strain ATCC 47054 / DSM 6125 / CFBP 8728 / NCIMB 11950 / KT2440).